A 117-amino-acid chain; its full sequence is Large ribosomal subunit protein uL18 (117 aa).

Belongs to the universal ribosomal protein uL18 family. Part of the 50S ribosomal subunit; part of the 5S rRNA/L5/L18/L25 subcomplex. Contacts the 5S and 23S rRNAs.

Its function is as follows. This is one of the proteins that bind and probably mediate the attachment of the 5S RNA into the large ribosomal subunit, where it forms part of the central protuberance. This chain is Large ribosomal subunit protein uL18, found in Sodalis glossinidius (strain morsitans).